The following is a 557-amino-acid chain: Dihydroxy-acid dehydratase (557 aa).

Cysteine 50 serves as a coordination point for [2Fe-2S] cluster. Aspartate 82 serves as a coordination point for Mg(2+). [2Fe-2S] cluster is bound at residue cysteine 123. The Mg(2+) site is built by aspartate 124 and lysine 125. Lysine 125 is modified (N6-carboxylysine). Cysteine 195 is a [2Fe-2S] cluster binding site. Mg(2+) is bound at residue glutamate 447. Catalysis depends on serine 473, which acts as the Proton acceptor.

It belongs to the IlvD/Edd family. Homodimer. The cofactor is [2Fe-2S] cluster. Mg(2+) is required as a cofactor.

It carries out the reaction (2R)-2,3-dihydroxy-3-methylbutanoate = 3-methyl-2-oxobutanoate + H2O. It catalyses the reaction (2R,3R)-2,3-dihydroxy-3-methylpentanoate = (S)-3-methyl-2-oxopentanoate + H2O. The protein operates within amino-acid biosynthesis; L-isoleucine biosynthesis; L-isoleucine from 2-oxobutanoate: step 3/4. It participates in amino-acid biosynthesis; L-valine biosynthesis; L-valine from pyruvate: step 3/4. Functionally, functions in the biosynthesis of branched-chain amino acids. Catalyzes the dehydration of (2R,3R)-2,3-dihydroxy-3-methylpentanoate (2,3-dihydroxy-3-methylvalerate) into 2-oxo-3-methylpentanoate (2-oxo-3-methylvalerate) and of (2R)-2,3-dihydroxy-3-methylbutanoate (2,3-dihydroxyisovalerate) into 2-oxo-3-methylbutanoate (2-oxoisovalerate), the penultimate precursor to L-isoleucine and L-valine, respectively. This is Dihydroxy-acid dehydratase from Nitrosomonas eutropha (strain DSM 101675 / C91 / Nm57).